The primary structure comprises 493 residues: ATP synthase subunit beta, chloroplastic (493 aa).

An ATP-binding site is contributed by 170 to 177; it reads GGAGVGKT.

Belongs to the ATPase alpha/beta chains family. F-type ATPases have 2 components, CF(1) - the catalytic core - and CF(0) - the membrane proton channel. CF(1) has five subunits: alpha(3), beta(3), gamma(1), delta(1), epsilon(1). CF(0) has four main subunits: a(1), b(1), b'(1) and c(9-12).

Its subcellular location is the plastid. The protein resides in the chloroplast thylakoid membrane. It catalyses the reaction ATP + H2O + 4 H(+)(in) = ADP + phosphate + 5 H(+)(out). Produces ATP from ADP in the presence of a proton gradient across the membrane. The catalytic sites are hosted primarily by the beta subunits. The protein is ATP synthase subunit beta, chloroplastic of Chaetosphaeridium globosum (Charophycean green alga).